Here is a 38-residue protein sequence, read N- to C-terminus: Cytochrome b6-f complex subunit 5 (38 aa).

The helical transmembrane segment at 5 to 25 threads the bilayer; it reads LLLGIVLGLIPVTLAGLFVAA.

The protein belongs to the PetG family. In terms of assembly, the 4 large subunits of the cytochrome b6-f complex are cytochrome b6, subunit IV (17 kDa polypeptide, PetD), cytochrome f and the Rieske protein, while the 4 small subunits are PetG, PetL, PetM and PetN. The complex functions as a dimer.

The protein localises to the cellular thylakoid membrane. Its function is as follows. Component of the cytochrome b6-f complex, which mediates electron transfer between photosystem II (PSII) and photosystem I (PSI), cyclic electron flow around PSI, and state transitions. PetG is required for either the stability or assembly of the cytochrome b6-f complex. The chain is Cytochrome b6-f complex subunit 5 from Picosynechococcus sp. (strain ATCC 27264 / PCC 7002 / PR-6) (Agmenellum quadruplicatum).